Reading from the N-terminus, the 82-residue chain is Protein Vpu (82 aa).

Residues 1-7 (MQPLQIS) are Extracellular-facing. The chain crosses the membrane as a helical span at residues 8-28 (AIVALVVAAIIAIVVWSIALL). The Cytoplasmic portion of the chain corresponds to 29–82 (EYRKLLRQRKIDRLIDRIRERAEDSGNESEGDQEELSALVEMGGHDAPWDIDDL). Phosphoserine; by host CK2 occurs at positions 53 and 57.

This sequence belongs to the HIV-1 VPU protein family. As to quaternary structure, homopentamer. Interacts with host CD4 and BRTC; these interactions induce proteasomal degradation of CD4. Interacts with host BST2; this interaction leads to the degradation of host BST2. Interacts with host FBXW11. Interacts with host AP1M1; this interaction plays a role in the mistrafficking and subsequent degradation of host BST2. Interacts with host RANBP2; this interaction allows Vpu to down-regulate host BLM sumoylation. In terms of processing, phosphorylated by host CK2. This phosphorylation is necessary for interaction with human BTRC and degradation of CD4.

It is found in the host membrane. Its activity is regulated as follows. Ion channel activity is inhibited by hexamethylene amiloride in vitro. Its function is as follows. Enhances virion budding by targeting host CD4 and Tetherin/BST2 to proteasome degradation. Degradation of CD4 prevents any unwanted premature interactions between viral Env and its host receptor CD4 in the endoplasmic reticulum. Degradation of antiretroviral protein Tetherin/BST2 is important for virion budding, as BST2 tethers new viral particles to the host cell membrane. Mechanistically, Vpu bridges either CD4 or BST2 to BTRC, a substrate recognition subunit of the Skp1/Cullin/F-box protein E3 ubiquitin ligase, induces their ubiquitination and subsequent proteasomal degradation. The alteration of the E3 ligase specificity by Vpu seems to promote the degradation of host IKBKB, leading to NF-kappa-B down-regulation and subsequent apoptosis. Acts as a viroporin that forms an oligomeric ion channel in membranes. Modulates the host DNA repair mechanisms to promote degradation of nuclear viral cDNA in cells that are already productively infected in order to suppress immune sensing and proviral hyper-integration (superinfection). Manipulates PML-NBs and modulates SUMOylation of host BLM protein thereby enhancing its DNA-end processing activity toward viral unintegrated linear DNA. Also inhibits RAD52-mediated homologous repair of viral cDNA, preventing the generation of dead-end circular forms of single copies of the long terminal repeat and permitting sustained nucleolytic attack. In Homo sapiens (Human), this protein is Protein Vpu.